The sequence spans 408 residues: Translation initiation factor 2 subunit gamma (408 aa).

The tr-type G domain occupies Gln-4 to Lys-201. The tract at residues Gly-13 to Thr-20 is G1. Mg(2+) is bound by residues Asp-16, Thr-20, Gly-41, and Ser-43. Asp-16–Thr-21 provides a ligand contact to GTP. A G2 region spans residues Gly-41–Arg-45. Residues Cys-56, Cys-59, Cys-71, and Cys-74 each coordinate Zn(2+). A G3 region spans residues Asp-88 to Gly-91. GTP is bound by residues Asn-144–Asp-147 and Ser-179–Gln-181. The tract at residues Asn-144–Asp-147 is G4. Residues Ser-179–Gln-181 are G5.

It belongs to the TRAFAC class translation factor GTPase superfamily. Classic translation factor GTPase family. EIF2G subfamily. As to quaternary structure, heterotrimer composed of an alpha, a beta and a gamma chain. Mg(2+) serves as cofactor.

It carries out the reaction GTP + H2O = GDP + phosphate + H(+). In terms of biological role, eIF-2 functions in the early steps of protein synthesis by forming a ternary complex with GTP and initiator tRNA. This chain is Translation initiation factor 2 subunit gamma, found in Methanothermobacter thermautotrophicus (strain ATCC 29096 / DSM 1053 / JCM 10044 / NBRC 100330 / Delta H) (Methanobacterium thermoautotrophicum).